We begin with the raw amino-acid sequence, 261 residues long: uncharacterized protein (261 aa).

This is an uncharacterized protein from Bacillus subtilis (strain 168).